A 317-amino-acid chain; its full sequence is Protoheme IX farnesyltransferase (317 aa).

The next 8 helical transmembrane spans lie at 25–45, 54–74, 126–146, 154–174, 181–201, 227–244, 249–271, and 281–301; these read FFALLKPRVMALVIFTALVGM, PVIAAVSLLMIAVGAGASGCL, LAAGLLAFTIAFYAVIYSMWL, IVIGGAAGALPPMIGQAVVTG, LVLFLIIFVWTPPHFWALALV, IVAYTLLLAPLGLAPVAL, LIYGLVALLGGLAMLALSLQVYH, and AAMGLFGFSILYLFLLFSALL.

The protein belongs to the UbiA prenyltransferase family. Protoheme IX farnesyltransferase subfamily.

It localises to the cell inner membrane. It carries out the reaction heme b + (2E,6E)-farnesyl diphosphate + H2O = Fe(II)-heme o + diphosphate. The protein operates within porphyrin-containing compound metabolism; heme O biosynthesis; heme O from protoheme: step 1/1. Its function is as follows. Converts heme B (protoheme IX) to heme O by substitution of the vinyl group on carbon 2 of heme B porphyrin ring with a hydroxyethyl farnesyl side group. The sequence is that of Protoheme IX farnesyltransferase from Methylobacterium sp. (strain 4-46).